Reading from the N-terminus, the 1382-residue chain is DNA-directed RNA polymerase subunit beta' (1382 aa).

Cysteine 70, cysteine 72, cysteine 85, and cysteine 88 together coordinate Zn(2+). Positions 460, 462, and 464 each coordinate Mg(2+). 4 residues coordinate Zn(2+): cysteine 808, cysteine 882, cysteine 889, and cysteine 892.

The protein belongs to the RNA polymerase beta' chain family. The RNAP catalytic core consists of 2 alpha, 1 beta, 1 beta' and 1 omega subunit. When a sigma factor is associated with the core the holoenzyme is formed, which can initiate transcription. The cofactor is Mg(2+). Zn(2+) is required as a cofactor.

The catalysed reaction is RNA(n) + a ribonucleoside 5'-triphosphate = RNA(n+1) + diphosphate. In terms of biological role, DNA-dependent RNA polymerase catalyzes the transcription of DNA into RNA using the four ribonucleoside triphosphates as substrates. This chain is DNA-directed RNA polymerase subunit beta', found in Geobacter sp. (strain M21).